Consider the following 281-residue polypeptide: Very long chain fatty acid elongase 7 (281 aa).

N-acetylalanine is present on Ala-2. At 2 to 27 (AFSDLTSRTVRLYDNWIKDADPRVED) the chain is on the lumenal side. The helical transmembrane segment at 28 to 48 (WLLMSSPLPQTIILGFYVYFV) threads the bilayer. The Cytoplasmic segment spans residues 49–66 (TSLGPKLMENRKPFELKK). The helical transmembrane segment at 67 to 87 (VMITYNFSIVLFSVYMFYEFI) threads the bilayer. The Lumenal portion of the chain corresponds to 88–115 (MSGWGTGYSFRCDIVDYSQSPTALRMVR). Cysteines 99 and 231 form a disulfide. The chain crosses the membrane as a helical span at residues 116-136 (TCWLYYFSKFIELLDTIFFIL). 5 residues coordinate 3-oxoeicosanoyl-CoA: Lys-124, Arg-137, Lys-139, Gln-142, and His-147. At 137–142 (RKKNSQ) the chain is on the cytoplasmic side. A helical membrane pass occupies residues 143-162 (VTFLHVFHHTIMPWTWWFGV). Residues 147–151 (HVFHH) carry the HxxHH motif motif. Catalysis depends on His-150, which acts as the Nucleophile. The Lumenal segment spans residues 163-171 (KFAAGGLGT). Residues 172–194 (FHAFLNTAVHVVMYSYYGLCALG) traverse the membrane as a helical segment. 3-oxoeicosanoyl-CoA is bound by residues Tyr-187, Lys-204, Thr-208, and Gln-211. Over 195-206 (PDYQKYLWWKKY) the chain is Cytoplasmic. Residues 207–227 (LTSLQLIQFVLITIHISQFFF) traverse the membrane as a helical segment. Topologically, residues 228–236 (MEDCKYQFP) are lumenal. The chain crosses the membrane as a helical span at residues 237–257 (VFQYIIMSYGCIFLLLFLHFW). The Cytoplasmic segment spans residues 258–281 (YRAYTKGQRLPKTVKHGICKNKDH). A 3-oxoeicosanoyl-CoA-binding site is contributed by Arg-266. The short motif at 277 to 281 (KNKDH) is the Di-lysine motif element.

The protein belongs to the ELO family. ELOVL7 subfamily. As to quaternary structure, homodimer. Interacts with TECR.

The protein localises to the endoplasmic reticulum membrane. The catalysed reaction is a very-long-chain acyl-CoA + malonyl-CoA + H(+) = a very-long-chain 3-oxoacyl-CoA + CO2 + CoA. The enzyme catalyses eicosanoyl-CoA + malonyl-CoA + H(+) = 3-oxodocosanoyl-CoA + CO2 + CoA. It carries out the reaction (5Z,8Z,11Z,14Z)-eicosatetraenoyl-CoA + malonyl-CoA + H(+) = (7Z,10Z,13Z,16Z)-3-oxodocosatetraenoyl-CoA + CO2 + CoA. It catalyses the reaction (6Z,9Z,12Z)-octadecatrienoyl-CoA + malonyl-CoA + H(+) = (8Z,11Z,14Z)-3-oxoeicosatrienoyl-CoA + CO2 + CoA. The catalysed reaction is (9Z,12Z)-octadecadienoyl-CoA + malonyl-CoA + H(+) = (11Z,14Z)-3-oxoicosa-11,14-dienoyl-CoA + CO2 + CoA. The enzyme catalyses (9Z)-octadecenoyl-CoA + malonyl-CoA + H(+) = 3-oxo-(11Z)-eicosenoyl-CoA + CO2 + CoA. It carries out the reaction octadecanoyl-CoA + malonyl-CoA + H(+) = 3-oxoeicosanoyl-CoA + CO2 + CoA. It catalyses the reaction hexadecanoyl-CoA + malonyl-CoA + H(+) = 3-oxooctadecanoyl-CoA + CO2 + CoA. The catalysed reaction is (9Z,12Z,15Z)-octadecatrienoyl-CoA + malonyl-CoA + H(+) = (11Z,14Z,17Z)-3-oxoeicosatrienoyl-CoA + CO2 + CoA. It participates in lipid metabolism; fatty acid biosynthesis. Its function is as follows. Catalyzes the first and rate-limiting reaction of the four reactions that constitute the long-chain fatty acids elongation cycle. This endoplasmic reticulum-bound enzymatic process allows the addition of 2 carbons to the chain of long- and very long-chain fatty acids (VLCFAs) per cycle. Condensing enzyme with higher activity toward C18 acyl-CoAs, especially C18:3(n-3) acyl-CoAs and C18:3(n-6)-CoAs. Also active toward C20:4-, C18:0-, C18:1-, C18:2- and C16:0-CoAs, and weakly toward C20:0-CoA. Little or no activity toward C22:0-, C24:0-, or C26:0-CoAs. May participate in the production of saturated and polyunsaturated VLCFAs of different chain lengths that are involved in multiple biological processes as precursors of membrane lipids and lipid mediators. The chain is Very long chain fatty acid elongase 7 from Bos taurus (Bovine).